Here is a 399-residue protein sequence, read N- to C-terminus: Digeranylgeranylglycerophospholipid reductase (399 aa).

Residues glycine 15, glutamate 34, cysteine 45, alanine 46, glycine 48, arginine 99, alanine 123, aspartate 280, glycine 292, and isoleucine 293 each contribute to the FAD site.

The protein belongs to the geranylgeranyl reductase family. DGGGPL reductase subfamily. The cofactor is FAD.

It catalyses the reaction a 2,3-bis-O-phytanyl-sn-glycerol 1-phospholipid + 8 oxidized 2[4Fe-4S]-[ferredoxin] = a 2,3-bis-O-(geranylgeranyl)-sn-glycerol 1-phospholipid + 8 reduced 2[4Fe-4S]-[ferredoxin] + 16 H(+). The enzyme catalyses 2,3-bis-O-(phytanyl)-sn-glycerol 1-phosphate + 8 oxidized 2[4Fe-4S]-[ferredoxin] = 2,3-bis-O-(geranylgeranyl)-sn-glycerol 1-phosphate + 8 reduced 2[4Fe-4S]-[ferredoxin] + 16 H(+). It carries out the reaction a 2,3-bis-O-phytanyl-sn-glycerol 1-phospholipid + 8 A = a 2,3-bis-O-(geranylgeranyl)-sn-glycerol 1-phospholipid + 8 AH2. The catalysed reaction is CDP-2,3-bis-O-(geranylgeranyl)-sn-glycerol + 8 AH2 = CDP-2,3-bis-O-(phytanyl)-sn-glycerol + 8 A. It catalyses the reaction archaetidylserine + 8 AH2 = 2,3-bis-O-phytanyl-sn-glycero-3-phospho-L-serine + 8 A. It functions in the pathway membrane lipid metabolism; glycerophospholipid metabolism. Its function is as follows. Is involved in the reduction of 2,3-digeranylgeranylglycerophospholipids (unsaturated archaeols) into 2,3-diphytanylglycerophospholipids (saturated archaeols) in the biosynthesis of archaeal membrane lipids. Catalyzes the formation of archaetidic acid (2,3-di-O-phytanyl-sn-glyceryl phosphate) from 2,3-di-O-geranylgeranylglyceryl phosphate (DGGGP) via the hydrogenation of each double bond of the isoprenoid chains. Is also probably able to reduce double bonds of geranyl groups in CDP-2,3-bis-O-(geranylgeranyl)-sn-glycerol and archaetidylserine, thus acting at various stages in the biosynthesis of archaeal membrane lipids. This Methanosphaerula palustris (strain ATCC BAA-1556 / DSM 19958 / E1-9c) protein is Digeranylgeranylglycerophospholipid reductase.